Reading from the N-terminus, the 309-residue chain is Fe-S cluster assembly protein dre2 (309 aa).

The interval 1–132 is N-terminal SAM-like domain; it reads MTTTIVLASP…LRRPAQVEAV (132 aa). The interval 133 to 195 is linker; sequence PLKLSTKKSA…DALVSDEETQ (63 aa). Cys-207, Cys-216, Cys-219, and Cys-221 together coordinate [2Fe-2S] cluster. A fe-S binding site A region spans residues 207-221; it reads CSKPGKKKRCKNCTC. [4Fe-4S] cluster contacts are provided by Cys-265, Cys-268, Cys-276, and Cys-279. 2 short sequence motifs (cx2C motif) span residues 265 to 268 and 276 to 279; these read CGSC and CSGC. The tract at residues 265–279 is fe-S binding site B; that stretch reads CGSCYLGDAFRCSGC.

Belongs to the anamorsin family. As to quaternary structure, monomer. Interacts with TAH18. Interacts with MIA40. The cofactor is [2Fe-2S] cluster. It depends on [4Fe-4S] cluster as a cofactor.

It localises to the cytoplasm. The protein localises to the mitochondrion intermembrane space. Component of the cytosolic iron-sulfur (Fe-S) protein assembly (CIA) machinery required for the maturation of extramitochondrial Fe-S proteins. Part of an electron transfer chain functioning in an early step of cytosolic Fe-S biogenesis, facilitating the de novo assembly of a [4Fe-4S] cluster on the scaffold complex CFD1-NBP35. Electrons are transferred to DRE2 from NADPH via the FAD- and FMN-containing protein TAH18. TAH18-DRE2 are also required for the assembly of the diferric tyrosyl radical cofactor of ribonucleotide reductase (RNR), probably by providing electrons for reduction during radical cofactor maturation in the catalytic small subunit RNR2. This Schizosaccharomyces japonicus (strain yFS275 / FY16936) (Fission yeast) protein is Fe-S cluster assembly protein dre2.